The primary structure comprises 225 residues: tRNA (guanine-N(1)-)-methyltransferase (225 aa).

S-adenosyl-L-methionine contacts are provided by residues Gly112 and 132-137; that span reads IGDYVL.

Belongs to the RNA methyltransferase TrmD family. Homodimer.

It localises to the cytoplasm. The enzyme catalyses guanosine(37) in tRNA + S-adenosyl-L-methionine = N(1)-methylguanosine(37) in tRNA + S-adenosyl-L-homocysteine + H(+). Its function is as follows. Specifically methylates guanosine-37 in various tRNAs. The sequence is that of tRNA (guanine-N(1)-)-methyltransferase from Bacteroides thetaiotaomicron (strain ATCC 29148 / DSM 2079 / JCM 5827 / CCUG 10774 / NCTC 10582 / VPI-5482 / E50).